The chain runs to 690 residues: Elongation factor G (690 aa).

Positions 8 to 283 (EDYRNFGIMA…AVVDYLPSPL (276 aa)) constitute a tr-type G domain. GTP contacts are provided by residues 17–24 (AHIDAGKT), 81–85 (DTPGH), and 135–138 (NKMD).

It belongs to the TRAFAC class translation factor GTPase superfamily. Classic translation factor GTPase family. EF-G/EF-2 subfamily.

Its subcellular location is the cytoplasm. Catalyzes the GTP-dependent ribosomal translocation step during translation elongation. During this step, the ribosome changes from the pre-translocational (PRE) to the post-translocational (POST) state as the newly formed A-site-bound peptidyl-tRNA and P-site-bound deacylated tRNA move to the P and E sites, respectively. Catalyzes the coordinated movement of the two tRNA molecules, the mRNA and conformational changes in the ribosome. The sequence is that of Elongation factor G from Bradyrhizobium sp. (strain BTAi1 / ATCC BAA-1182).